The following is a 298-amino-acid chain: ATP synthase gamma chain (298 aa).

The protein belongs to the ATPase gamma chain family. As to quaternary structure, F-type ATPases have 2 components, CF(1) - the catalytic core - and CF(0) - the membrane proton channel. CF(1) has five subunits: alpha(3), beta(3), gamma(1), delta(1), epsilon(1). CF(0) has three main subunits: a, b and c.

It localises to the cell inner membrane. In terms of biological role, produces ATP from ADP in the presence of a proton gradient across the membrane. The gamma chain is believed to be important in regulating ATPase activity and the flow of protons through the CF(0) complex. This Francisella tularensis subsp. mediasiatica (strain FSC147) protein is ATP synthase gamma chain.